Here is a 342-residue protein sequence, read N- to C-terminus: Phosphate acyltransferase (342 aa).

It belongs to the PlsX family. In terms of assembly, homodimer. Probably interacts with PlsY.

The protein localises to the cytoplasm. It carries out the reaction a fatty acyl-[ACP] + phosphate = an acyl phosphate + holo-[ACP]. The protein operates within lipid metabolism; phospholipid metabolism. Catalyzes the reversible formation of acyl-phosphate (acyl-PO(4)) from acyl-[acyl-carrier-protein] (acyl-ACP). This enzyme utilizes acyl-ACP as fatty acyl donor, but not acyl-CoA. The chain is Phosphate acyltransferase from Shewanella sp. (strain ANA-3).